Consider the following 353-residue polypeptide: Cytochrome c biogenesis protein CcsA (353 aa).

Helical transmembrane passes span 15-35 (FAILFLTMLVYWGGAAFPNLP), 37-57 (LAALGTAGMAIANLCMATLLG), 68-88 (LSNLYESLFFLTWGITTVHLI), 97-117 (LVGVVTAPVAMLIAAFATMTL), 142-162 (VMMLSYSALMVGALLAIAFLI), 261-281 (IIGLGFPLLTIGIIAGGVWAN), 288-308 (WSWDPKETWALITWLVFAAYL), and 322-342 (AILAATGFVVVWICYLGVNLL).

It belongs to the CcmF/CycK/Ccl1/NrfE/CcsA family. As to quaternary structure, may interact with ccs1.

The protein localises to the cellular thylakoid membrane. In terms of biological role, required during biogenesis of c-type cytochromes (cytochrome c6 and cytochrome f) at the step of heme attachment. The chain is Cytochrome c biogenesis protein CcsA from Nostoc punctiforme (strain ATCC 29133 / PCC 73102).